An 874-amino-acid chain; its full sequence is MKAAEIREKFLKFFESKGHTIVRSSSLVPGNDPTLMFTNSGMVQFKDVFLGTDPRPYSRATTAQRSVRAGGKHNDLENVGYTARHHTFFEMLGNFSFGDYFKHDAIKFAWELLTTVYQLPKDKLWVTVYQEDDEAYDIWAKEVGVPTERIIRIGDNKGARYASDNFWTMGDTGPCGPCTEIFYDHGPDVWGGPPGSPEEDGDRYIEIWNLVFMQFNRDAQGNMTRLPKQSVDTGMGLERLAAVLQHVHSNYEIDLFQNLIKAAARVTEISDLTNNSLKVIADHIRACSFLIVDGVIPGNEGRGYVLRRIVRRAIRHGYKLGRKGAFFHKLVADLVAEMGTAYPELKEAEQRVTDVLRQEEERFFETIEHGMSILEAALAEVEAKGGKVLDGELAFKLHDTYGFPLDLTADVCRERGMTVDEPAFDDAMARQREQARAAGKFKATQGLEYSGAKTTFHGYEEIAFDDAKVVALYVDGSAVNEVKAGQDAVVVLDHTPFYAESGGQVGDQGVLANAATRFAVADTLKVQADVIGHHGTLEQGTLKVGDVLRAEIDAQRRARTQRNHSATHLMHKALREVLGAHVQQKGSLVDADKTRFDFAHNAPMTDDEIRRVEQIVNNEILANAPGIVRVMPYDEAVKGGAMALFGEKYGDEVRVLDLGFSRELCGGTHVHRTGDIGLFKIVVEGGVAAGIRRVEAITGDNAVRYVQELDARVNEAAAALKAQPSELTQRIAQVQEQVKSLEKELGALKSKLASSQGDELAQQAVEVAGVYVLAATLDGADAKTLRETVDKLKDKLKSAAIVLAAVEGGKVSLIAGVTPDASKKVKAGELVNFVAQQVGGKGGGRPDMAQAGGTEPANLPGALAGVKGWVEERL.

Residues H564, H568, C665, and H669 each contribute to the Zn(2+) site.

The protein belongs to the class-II aminoacyl-tRNA synthetase family. Requires Zn(2+) as cofactor.

Its subcellular location is the cytoplasm. It catalyses the reaction tRNA(Ala) + L-alanine + ATP = L-alanyl-tRNA(Ala) + AMP + diphosphate. Its function is as follows. Catalyzes the attachment of alanine to tRNA(Ala) in a two-step reaction: alanine is first activated by ATP to form Ala-AMP and then transferred to the acceptor end of tRNA(Ala). Also edits incorrectly charged Ser-tRNA(Ala) and Gly-tRNA(Ala) via its editing domain. This Burkholderia cenocepacia (strain HI2424) protein is Alanine--tRNA ligase.